A 229-amino-acid chain; its full sequence is NAD(P)H-hydrate epimerase (229 aa).

The region spanning 10 to 224 (SREVDQIAIE…DIGIPPALLD (215 aa)) is the YjeF N-terminal domain. 57 to 61 (NNGGD) serves as a coordination point for (6S)-NADPHX. K(+) contacts are provided by Asn-58 and Asp-129. (6S)-NADPHX is bound by residues 133-139 (GTGIRGQ) and Asp-167. Residue Ser-170 participates in K(+) binding.

Belongs to the NnrE/AIBP family. The cofactor is K(+).

It catalyses the reaction (6R)-NADHX = (6S)-NADHX. The catalysed reaction is (6R)-NADPHX = (6S)-NADPHX. Its function is as follows. Catalyzes the epimerization of the S- and R-forms of NAD(P)HX, a damaged form of NAD(P)H that is a result of enzymatic or heat-dependent hydration. This is a prerequisite for the S-specific NAD(P)H-hydrate dehydratase to allow the repair of both epimers of NAD(P)HX. The protein is NAD(P)H-hydrate epimerase of Rubinisphaera brasiliensis (strain ATCC 49424 / DSM 5305 / JCM 21570 / IAM 15109 / NBRC 103401 / IFAM 1448) (Planctomyces brasiliensis).